A 150-amino-acid polypeptide reads, in one-letter code: Avidin-related protein 2 (150 aa).

Positions 1–24 (MVHATSPLLLLLLLSLALVAPSLS) are cleaved as a signal peptide. Residues 26–147 (RKCSLTGEWD…GNNDFTRQHT (122 aa)) enclose the Avidin-like domain. An intrachain disulfide couples C28 to C105. Biotin-binding residues include N36, S40, Y57, T59, and D63. Residues N67 and N93 are each glycosylated (N-linked (GlcNAc...) asparagine). Biotin contacts are provided by S95, S99, and N140.

As to quaternary structure, homotetramer. In terms of processing, glycosylated.

The protein localises to the secreted. Functionally, forms a strong non-covalent specific complex with biotin. The sequence is that of Avidin-related protein 2 (AVR2) from Gallus gallus (Chicken).